Consider the following 198-residue polypeptide: Probable nicotinate-nucleotide adenylyltransferase (198 aa).

Belongs to the NadD family.

It catalyses the reaction nicotinate beta-D-ribonucleotide + ATP + H(+) = deamido-NAD(+) + diphosphate. Its pathway is cofactor biosynthesis; NAD(+) biosynthesis; deamido-NAD(+) from nicotinate D-ribonucleotide: step 1/1. Catalyzes the reversible adenylation of nicotinate mononucleotide (NaMN) to nicotinic acid adenine dinucleotide (NaAD). In Herpetosiphon aurantiacus (strain ATCC 23779 / DSM 785 / 114-95), this protein is Probable nicotinate-nucleotide adenylyltransferase.